Reading from the N-terminus, the 340-residue chain is Uroporphyrinogen decarboxylase (340 aa).

Substrate contacts are provided by residues 21–25, aspartate 71, tyrosine 148, serine 203, and histidine 316; that span reads RQAGR.

The protein belongs to the uroporphyrinogen decarboxylase family. In terms of assembly, homodimer.

It is found in the cytoplasm. It carries out the reaction uroporphyrinogen III + 4 H(+) = coproporphyrinogen III + 4 CO2. Its pathway is porphyrin-containing compound metabolism; protoporphyrin-IX biosynthesis; coproporphyrinogen-III from 5-aminolevulinate: step 4/4. In terms of biological role, catalyzes the decarboxylation of four acetate groups of uroporphyrinogen-III to yield coproporphyrinogen-III. In Campylobacter concisus (strain 13826), this protein is Uroporphyrinogen decarboxylase.